The sequence spans 392 residues: Protein O-glucosyltransferase 1 (392 aa).

The N-terminal stretch at 1-23 (MEWWASSPLRLWLLLFLLPSAQG) is a signal peptide. Residues Asn40 and Asn53 are each glycosylated (N-linked (GlcNAc...) asparagine). 4 disulfide bridges follow: Cys49–Cys56, Cys54–Cys357, Cys102–Cys108, and Cys263–Cys286. Positions 103-107 (MFPSR) are interaction with the consensus sequence C-X-S-X-[PA]-C in peptide substrates. Asp133 functions as the Proton donor/acceptor in the catalytic mechanism. Positions 172–178 (AVWPIYP) are interaction with the consensus sequence C-X-S-X-[PA]-C in peptide substrates. Tyr177 is a binding site for UDP-alpha-D-glucose. A glycan (N-linked (GlcNAc...) asparagine) is linked at Asn204. Residues Ser212, Arg218, and 274 to 279 (VAASFR) each bind UDP-alpha-D-glucose. Asn373 is a glycosylation site (N-linked (GlcNAc...) asparagine). The short motif at 389 to 392 (KTEL) is the Prevents secretion from ER element.

This sequence belongs to the glycosyltransferase 90 family. As to expression, expressed in most adult tissues at different intensities. Abundantly expressed in liver. Expressed also in brain, heart, skeletal muscle, spleen, kidney, placenta, lung and peripheral blood leukocyte. Not detectable in colon, thymus and small intestine. Expressed in the epidermis, especially in the upper parts, stratum spinosum and stratum granulosum (at protein level).

The protein resides in the endoplasmic reticulum lumen. It carries out the reaction L-seryl-[EGF-like domain protein] + UDP-alpha-D-xylose = 3-O-(beta-D-xylosyl)-L-seryl-[EGF-like domain protein] + UDP + H(+). The enzyme catalyses L-seryl-[EGF-like domain protein] + UDP-alpha-D-glucose = 3-O-(beta-D-glucosyl)-L-seryl-[EGF-like domain protein] + UDP + H(+). It functions in the pathway protein modification; protein glycosylation. In terms of biological role, dual specificity glycosyltransferase that catalyzes the transfer of glucose and xylose from UDP-glucose and UDP-xylose, respectively, to a serine residue found in the consensus sequence of C-X-S-X-P-C. Specifically targets extracellular EGF repeats of protein such as CRB2, F7, F9 and NOTCH2. Acts as a positive regulator of Notch signaling by mediating O-glucosylation of Notch, leading to regulate muscle development. Notch glucosylation does not affect Notch ligand binding. Required during early development to promote gastrulation: acts by mediating O-glucosylation of CRB2, which is required for CRB2 localization to the cell membrane. The chain is Protein O-glucosyltransferase 1 from Homo sapiens (Human).